Reading from the N-terminus, the 362-residue chain is Phosphatidylserine decarboxylase proenzyme (362 aa).

Residues 26-44 (YLLTGVTILSFIFMFQYKY) traverse the membrane as a helical segment. Catalysis depends on charge relay system; for autoendoproteolytic cleavage activity residues Asp-147, His-206, and Ser-316. Ser-316 serves as the catalytic Schiff-base intermediate with substrate; via pyruvic acid; for decarboxylase activity. Ser-316 carries the post-translational modification Pyruvic acid (Ser); by autocatalysis.

It belongs to the phosphatidylserine decarboxylase family. PSD-B subfamily. Eukaryotic type I sub-subfamily. Heterodimer of a large membrane-associated beta subunit and a small pyruvoyl-containing alpha subunit. The cofactor is pyruvate. Post-translationally, is synthesized initially as an inactive proenzyme. Formation of the active enzyme involves a self-maturation process in which the active site pyruvoyl group is generated from an internal serine residue via an autocatalytic post-translational modification. Two non-identical subunits are generated from the proenzyme in this reaction, and the pyruvate is formed at the N-terminus of the alpha chain, which is derived from the carboxyl end of the proenzyme. The autoendoproteolytic cleavage occurs by a canonical serine protease mechanism, in which the side chain hydroxyl group of the serine supplies its oxygen atom to form the C-terminus of the beta chain, while the remainder of the serine residue undergoes an oxidative deamination to produce ammonia and the pyruvoyl prosthetic group on the alpha chain. During this reaction, the Ser that is part of the protease active site of the proenzyme becomes the pyruvoyl prosthetic group, which constitutes an essential element of the active site of the mature decarboxylase.

Its subcellular location is the endoplasmic reticulum membrane. The catalysed reaction is a 1,2-diacyl-sn-glycero-3-phospho-L-serine + H(+) = a 1,2-diacyl-sn-glycero-3-phosphoethanolamine + CO2. Its pathway is phospholipid metabolism; phosphatidylethanolamine biosynthesis; phosphatidylethanolamine from CDP-diacylglycerol: step 2/2. Catalyzes the formation of phosphatidylethanolamine (PtdEtn) from phosphatidylserine (PtdSer). Plays a central role in phospholipid metabolism and in the interorganelle trafficking of phosphatidylserine. In Plasmodium falciparum, this protein is Phosphatidylserine decarboxylase proenzyme.